The chain runs to 155 residues: Small ribosomal subunit protein uS7c (155 aa).

The protein belongs to the universal ribosomal protein uS7 family. In terms of assembly, part of the 30S ribosomal subunit.

Its subcellular location is the plastid. The protein resides in the chloroplast. In terms of biological role, one of the primary rRNA binding proteins, it binds directly to 16S rRNA where it nucleates assembly of the head domain of the 30S subunit. The protein is Small ribosomal subunit protein uS7c (rps7) of Marchantia polymorpha (Common liverwort).